A 42-amino-acid chain; its full sequence is Protein MGF 360-20R (42 aa).

Belongs to the asfivirus MGF 360 family.

Plays a role in virus cell tropism, and may be required for efficient virus replication in macrophages. The sequence is that of Protein MGF 360-20R from African swine fever virus (strain Badajoz 1971 Vero-adapted) (Ba71V).